The primary structure comprises 291 residues: ATP synthase gamma chain (291 aa).

The protein belongs to the ATPase gamma chain family. F-type ATPases have 2 components, CF(1) - the catalytic core - and CF(0) - the membrane proton channel. CF(1) has five subunits: alpha(3), beta(3), gamma(1), delta(1), epsilon(1). CF(0) has three main subunits: a, b and c.

Its subcellular location is the cell inner membrane. Produces ATP from ADP in the presence of a proton gradient across the membrane. The gamma chain is believed to be important in regulating ATPase activity and the flow of protons through the CF(0) complex. This Ralstonia nicotianae (strain ATCC BAA-1114 / GMI1000) (Ralstonia solanacearum) protein is ATP synthase gamma chain.